The sequence spans 218 residues: UPF0319 protein PM0395 (218 aa).

The N-terminal stretch at 1 to 21 (MKFRFAALASVALLTSTVSVA) is a signal peptide.

Belongs to the UPF0319 family.

The polypeptide is UPF0319 protein PM0395 (Pasteurella multocida (strain Pm70)).